The chain runs to 556 residues: 2-succinyl-5-enolpyruvyl-6-hydroxy-3-cyclohexene-1-carboxylate synthase (556 aa).

Belongs to the TPP enzyme family. MenD subfamily. As to quaternary structure, homodimer. Requires Mg(2+) as cofactor. Mn(2+) serves as cofactor. Thiamine diphosphate is required as a cofactor.

It carries out the reaction isochorismate + 2-oxoglutarate + H(+) = 5-enolpyruvoyl-6-hydroxy-2-succinyl-cyclohex-3-ene-1-carboxylate + CO2. The protein operates within quinol/quinone metabolism; 1,4-dihydroxy-2-naphthoate biosynthesis; 1,4-dihydroxy-2-naphthoate from chorismate: step 2/7. It participates in quinol/quinone metabolism; menaquinone biosynthesis. Its function is as follows. Catalyzes the thiamine diphosphate-dependent decarboxylation of 2-oxoglutarate and the subsequent addition of the resulting succinic semialdehyde-thiamine pyrophosphate anion to isochorismate to yield 2-succinyl-5-enolpyruvyl-6-hydroxy-3-cyclohexene-1-carboxylate (SEPHCHC). This chain is 2-succinyl-5-enolpyruvyl-6-hydroxy-3-cyclohexene-1-carboxylate synthase, found in Escherichia coli (strain 55989 / EAEC).